Consider the following 387-residue polypeptide: Zinc homeostasis factor 1 (387 aa).

A run of 4 helical transmembrane segments spans residues isoleucine 10–alanine 30, leucine 34–leucine 54, glutamate 77–methionine 97, and threonine 113–phenylalanine 133. Over residues serine 195–serine 214 the composition is skewed to polar residues. The interval serine 195–lysine 221 is disordered. The next 2 helical transmembrane spans lie at phenylalanine 234–isoleucine 254 and phenylalanine 263–proline 283.

Belongs to the cation diffusion facilitator (CDF) transporter (TC 2.A.4) family. SLC30A subfamily.

The protein resides in the endoplasmic reticulum membrane. The protein localises to the nucleus membrane. Involved in zinc homeostasis, where it plays a role in its accumulation in the endoplasmic reticulum/nucleus. Also has a role in the sequestration of cadmium into the endoplasmic reticulum. The protein is Zinc homeostasis factor 1 (zhf1) of Schizosaccharomyces pombe (strain 972 / ATCC 24843) (Fission yeast).